A 300-amino-acid polypeptide reads, in one-letter code: Acetaldehyde dehydrogenase (300 aa).

Residue 10-13 (SGNI) participates in NAD(+) binding. Cys129 serves as the catalytic Acyl-thioester intermediate. Residues 160–168 (SAGPGTRKN) and Asn271 each bind NAD(+).

The protein belongs to the acetaldehyde dehydrogenase family.

It carries out the reaction acetaldehyde + NAD(+) + CoA = acetyl-CoA + NADH + H(+). The sequence is that of Acetaldehyde dehydrogenase from Alkalilimnicola ehrlichii (strain ATCC BAA-1101 / DSM 17681 / MLHE-1).